We begin with the raw amino-acid sequence, 277 residues long: Energy-coupling factor transporter transmembrane protein EcfT (277 aa).

The next 6 membrane-spanning stretches (helical) occupy residues 39–59, 61–81, 85–105, 121–141, 163–183, and 254–274; these read ITILFIWAIFLANNPITYAII, FFCFLAIIATGLKARVFWNGV, IGLIFFTSLLQLFFMTGGHVF, AIYIFIRFTLIILISTVMTVT, VPVDEIALVISIALRFVPTLF, and SKYDLISLAYFILLVGLLLIF.

The protein belongs to the energy-coupling factor EcfT family. Forms a stable energy-coupling factor (ECF) transporter complex composed of 2 membrane-embedded substrate-binding proteins (S component), 2 ATP-binding proteins (A component) and 2 transmembrane proteins (T component). May be able to interact with more than 1 S component at a time.

It localises to the cell membrane. In terms of biological role, transmembrane (T) component of an energy-coupling factor (ECF) ABC-transporter complex. Unlike classic ABC transporters this ECF transporter provides the energy necessary to transport a number of different substrates. This chain is Energy-coupling factor transporter transmembrane protein EcfT, found in Lactobacillus helveticus (strain DPC 4571).